The sequence spans 162 residues: AP-1 complex subunit sigma-1 (162 aa).

It belongs to the adaptor complexes small subunit family. Adaptor protein complex 1 (AP-1) is a heterotetramer composed of two large adaptins (gamma-type subunit apl4 and beta-type subunit apl2), a medium adaptin (mu-type subunit apm1) and a small adaptin (sigma-type subunit aps1). AP-1 interacts with clathrin.

The protein resides in the cytoplasm. Its subcellular location is the nucleus. The protein localises to the cytoplasmic vesicle. It localises to the clathrin-coated vesicle membrane. It is found in the endosome. The protein resides in the golgi apparatus. Its function is as follows. Component of the AP-1 complex which links clathrin to receptors in coated vesicles. Clathrin-associated protein complexes are believed to interact with the cytoplasmic tails of membrane proteins, leading to their selection and concentration. In Schizosaccharomyces pombe (strain 972 / ATCC 24843) (Fission yeast), this protein is AP-1 complex subunit sigma-1 (vas2).